Here is a 391-residue protein sequence, read N- to C-terminus: uncharacterized protein (391 aa).

The protein belongs to the mimivirus L17x/L18x family.

This is an uncharacterized protein from Acanthamoeba polyphaga (Amoeba).